The primary structure comprises 391 residues: Ferrochelatase (391 aa).

His196 and Glu281 together coordinate Fe cation.

This sequence belongs to the ferrochelatase family.

It localises to the cytoplasm. The enzyme catalyses heme b + 2 H(+) = protoporphyrin IX + Fe(2+). It participates in porphyrin-containing compound metabolism; protoheme biosynthesis; protoheme from protoporphyrin-IX: step 1/1. Its function is as follows. Catalyzes the ferrous insertion into protoporphyrin IX. The polypeptide is Ferrochelatase (Prochlorococcus marinus (strain MIT 9312)).